Here is a 393-residue protein sequence, read N- to C-terminus: Acetylornithine aminotransferase 1 (393 aa).

Arg-131 contributes to the N(2)-acetyl-L-ornithine binding site. 215–218 is a binding site for pyridoxal 5'-phosphate; sequence DEVQ. Position 244 is an N6-(pyridoxal phosphate)lysine (Lys-244). Thr-272 is a N(2)-acetyl-L-ornithine binding site. Thr-273 serves as a coordination point for pyridoxal 5'-phosphate.

The protein belongs to the class-III pyridoxal-phosphate-dependent aminotransferase family. ArgD subfamily. In terms of assembly, homodimer. The cofactor is pyridoxal 5'-phosphate.

It is found in the cytoplasm. The catalysed reaction is N(2)-acetyl-L-ornithine + 2-oxoglutarate = N-acetyl-L-glutamate 5-semialdehyde + L-glutamate. The protein operates within amino-acid biosynthesis; L-arginine biosynthesis; N(2)-acetyl-L-ornithine from L-glutamate: step 4/4. In Bordetella pertussis (strain Tohama I / ATCC BAA-589 / NCTC 13251), this protein is Acetylornithine aminotransferase 1.